We begin with the raw amino-acid sequence, 519 residues long: NADH-ubiquinone oxidoreductase chain 4 (519 aa).

The next 14 helical transmembrane spans lie at 2–22 (SGLL…ILSF), 68–88 (IAFI…ILFD), 112–132 (VDGL…IALI), 146–166 (LIII…LDVL), 167–187 (LFYI…GLFG), 196–216 (FYIF…ILTM), 239–259 (IFLF…VFLN), 270–290 (PLGG…YGIF), 304–324 (YTSI…FSTL), 333–353 (IAYS…SNII), 360–380 (ILLG…AGGV), 399–419 (VMPL…GAPL), 437–457 (LPLL…YTIY), and 484–504 (FFLL…PSFI).

It belongs to the complex I subunit 4 family.

The protein localises to the mitochondrion membrane. It carries out the reaction a ubiquinone + NADH + 5 H(+)(in) = a ubiquinol + NAD(+) + 4 H(+)(out). In terms of biological role, core subunit of the mitochondrial membrane respiratory chain NADH dehydrogenase (Complex I) that is believed to belong to the minimal assembly required for catalysis. Complex I functions in the transfer of electrons from NADH to the respiratory chain. The immediate electron acceptor for the enzyme is believed to be ubiquinone. This chain is NADH-ubiquinone oxidoreductase chain 4 (ND4), found in Podospora anserina (strain S / ATCC MYA-4624 / DSM 980 / FGSC 10383) (Pleurage anserina).